The following is a 114-amino-acid chain: Large ribosomal subunit protein bL20 (114 aa).

This sequence belongs to the bacterial ribosomal protein bL20 family.

In terms of biological role, binds directly to 23S ribosomal RNA and is necessary for the in vitro assembly process of the 50S ribosomal subunit. It is not involved in the protein synthesizing functions of that subunit. This is Large ribosomal subunit protein bL20 from Anaeromyxobacter dehalogenans (strain 2CP-1 / ATCC BAA-258).